Here is a 474-residue protein sequence, read N- to C-terminus: MLRIAILGRPNVGKSSLFNRMCKRSLAIVNSQEGTTRDRLYGEIRGWGIPVQVIDTGGVDKDSEDHFQKHIYKQALAGANEADILLLVIDIRCGITELDAEIAKQLLYLKKPLILVANKADTLKDEYRVHELYKIGISEIVTVSASHDKHIDKLIHKIKTLANVPEVVEEPREEMHEEEVPGMEFPETKEFLSDDEDEDTAFSQSSVADKPLKIALIGRPNVGKSSIINALLNEERCIIDNVPGTTRDNIDILYSHNDRSYLFIDTAGLRKMKSVKNSIEWISSSRTEKAIARADICLLVIDATHHLSSYDKRILSLISKQKKPHIILVNKWDLIEGVRMEHYIRDLRATDMYIGQSKILCISAATKRNLRQIFSSIDELHTTVSSKVPTPVVNKTLALALQKHHPQVINGRRLRVYYAIHKTATPFQFLLFINAKSLLTKHYECYLKNTLKSAFNLYGVPFDLEFKEKTKRTN.

EngA-type G domains lie at 2 to 166 and 212 to 385; these read LRIA…NVPE and LKIA…TTVS. GTP-binding positions include 8–15, 55–59, 118–121, 218–225, 265–269, and 330–333; these read GRPNVGKS, DTGGV, NKAD, DTAGL, and NKWD. The KH-like domain maps to 386–470; it reads SKVPTPVVNK…PFDLEFKEKT (85 aa).

The protein belongs to the TRAFAC class TrmE-Era-EngA-EngB-Septin-like GTPase superfamily. EngA (Der) GTPase family. Associates with the 50S ribosomal subunit.

Functionally, GTPase that plays an essential role in the late steps of ribosome biogenesis. This is GTPase Der from Chlamydia abortus (strain DSM 27085 / S26/3) (Chlamydophila abortus).